The following is a 372-amino-acid chain: Ligninase LG6 (372 aa).

The first 21 residues, 1–21 (MALKQLAAAVALALSIQAAQG), serve as a signal peptide directing secretion. A propeptide spanning residues 22–28 (AAVKEKR) is cleaved from the precursor. 2 cysteine pairs are disulfide-bonded: C31-C43 and C62-C148. H75 acts as the Proton acceptor in catalysis. Positions 76, 94, 96, and 98 each coordinate Ca(2+). H204 contacts heme b. Ca(2+)-binding residues include S205, D222, T224, V227, and D229. A disulfide bond links C277 and C345. An N-linked (GlcNAc...) asparagine glycan is attached at N285. Positions 352 to 361 (TLTTLPGPET) are enriched in low complexity. Positions 352-372 (TLTTLPGPETSVQRIQPPPGA) are disordered.

This sequence belongs to the peroxidase family. Ligninase subfamily. Heme b is required as a cofactor. It depends on Ca(2+) as a cofactor.

It carries out the reaction 1-(3,4-dimethoxyphenyl)-2-(2-methoxyphenoxy)propane-1,3-diol + H2O2 = 3,4-dimethoxybenzaldehyde + guaiacol + glycolaldehyde + H2O. The catalysed reaction is 2 (3,4-dimethoxyphenyl)methanol + H2O2 = 2 (3,4-dimethoxyphenyl)methanol radical + 2 H2O. It participates in secondary metabolite metabolism; lignin degradation. In terms of biological role, depolymerization of lignin. Catalyzes the C(alpha)-C(beta) cleavage of the propyl side chains of lignin. This chain is Ligninase LG6 (GLG6), found in Phanerodontia chrysosporium (White-rot fungus).